A 447-amino-acid chain; its full sequence is Signal recognition particle 54 kDa protein (447 aa).

GTP contacts are provided by residues 105–112, 187–191, and 247–250; these read GVQGSGKT, DTAGR, and TKMD.

Belongs to the GTP-binding SRP family. SRP54 subfamily. Part of the signal recognition particle protein translocation system, which is composed of SRP and FtsY. Archaeal SRP consists of a 7S RNA molecule of 300 nucleotides and two protein subunits: SRP54 and SRP19.

Its subcellular location is the cytoplasm. The enzyme catalyses GTP + H2O = GDP + phosphate + H(+). Involved in targeting and insertion of nascent membrane proteins into the cytoplasmic membrane. Binds to the hydrophobic signal sequence of the ribosome-nascent chain (RNC) as it emerges from the ribosomes. The SRP-RNC complex is then targeted to the cytoplasmic membrane where it interacts with the SRP receptor FtsY. This chain is Signal recognition particle 54 kDa protein, found in Hyperthermus butylicus (strain DSM 5456 / JCM 9403 / PLM1-5).